Here is a 246-residue protein sequence, read N- to C-terminus: MNIRNARPEDLMNMQHCNLLCLPENYQMKYYFYHGLSWPQLSYIAEDEDGKIVGYVLAKMEEDPDDVPHGHITSLAVKRSHRRLGLAQKLMDQASRAMIENFSAKYVSLHVRKSNRAALHLYSNTLNFQVSEVEPKYYADGEDAYAMKRDLAQMADELRRQLVLKKSRYVVLGSEENQEAQDSTLPDAEEACQPENPAGKGSEACQPENPAGKGSEACQPENPAGKDTGSHSTDVQDSSEYLDSTS.

The segment at 1–58 (MNIRNARPEDLMNMQHCNLLCLPENYQMKYYFYHGLSWPQLSYIAEDEDGKIVGYVLA) is interaction with NAA15. The region spanning 1-152 (MNIRNARPED…DAYAMKRDLA (152 aa)) is the N-acetyltransferase domain. The segment at 175–246 (EENQEAQDST…DSSEYLDSTS (72 aa)) is disordered. Over residues 230-246 (SHSTDVQDSSEYLDSTS) the composition is skewed to polar residues.

Belongs to the acetyltransferase family. ARD1 subfamily. Component of the N-terminal acetyltransferase A (NatA) complex composed of NAA11 and NAA15. Interacts with HIF1A.

The protein localises to the cytoplasm. The protein resides in the nucleus. It carries out the reaction N-terminal glycyl-[protein] + acetyl-CoA = N-terminal N(alpha)-acetylglycyl-[protein] + CoA + H(+). The catalysed reaction is N-terminal L-alanyl-[protein] + acetyl-CoA = N-terminal N(alpha)-acetyl-L-alanyl-[protein] + CoA + H(+). It catalyses the reaction N-terminal L-seryl-[protein] + acetyl-CoA = N-terminal N(alpha)-acetyl-L-seryl-[protein] + CoA + H(+). The enzyme catalyses N-terminal L-valyl-[protein] + acetyl-CoA = N-terminal N(alpha)-acetyl-L-valyl-[protein] + CoA + H(+). It carries out the reaction N-terminal L-cysteinyl-[protein] + acetyl-CoA = N-terminal N(alpha)-acetyl-L-cysteinyl-[protein] + CoA + H(+). The catalysed reaction is N-terminal L-threonyl-[protein] + acetyl-CoA = N-terminal N(alpha)-acetyl-L-threonyl-[protein] + CoA + H(+). Its function is as follows. Displays alpha (N-terminal) acetyltransferase activity. Proposed alternative catalytic subunit of the N-terminal acetyltransferase A (NatA) complex. The chain is N-alpha-acetyltransferase 11 (Naa11) from Rattus norvegicus (Rat).